The primary structure comprises 313 residues: Ribosomal protein L11 methyltransferase (313 aa).

Thr-164, Gly-185, Asp-207, and Asn-249 together coordinate S-adenosyl-L-methionine.

It belongs to the methyltransferase superfamily. PrmA family.

The protein resides in the cytoplasm. The catalysed reaction is L-lysyl-[protein] + 3 S-adenosyl-L-methionine = N(6),N(6),N(6)-trimethyl-L-lysyl-[protein] + 3 S-adenosyl-L-homocysteine + 3 H(+). In terms of biological role, methylates ribosomal protein L11. The protein is Ribosomal protein L11 methyltransferase of Clostridium botulinum (strain Alaska E43 / Type E3).